The primary structure comprises 333 residues: MQQYSSKYNKQAILLVNLGTPDNYDTKSIKRYLKEFLSDPRVIEANPVLWKIILNLIILPIRAKKNVHTYKTVWNKQHNKSPLLFYTENLADKLDKKLDNYIVDYAMRYGNPSIESKIKSLQDQGATEIIIFPLYPQYSATTTATVYDEVYRVLSKLRWQPTIKGINPYYDNKFHIQTISQQIKEHLKKLDSTPDTVLFSFHGLPKEYFDKGDPYYCHCYKTYRLVKEELQNEYPNIDFELSFQSRFGPKKWLEPYTTVKLEEFAKQNKSVVVIAPGFSADCLETLEELAISEKENFIKKGGKEFSLIPCLNDSNQHVDMLYNIIDEEICLKK.

Residues His202 and Glu284 each contribute to the Fe cation site.

It belongs to the ferrochelatase family.

It localises to the cytoplasm. It catalyses the reaction heme b + 2 H(+) = protoporphyrin IX + Fe(2+). The protein operates within porphyrin-containing compound metabolism; protoheme biosynthesis; protoheme from protoporphyrin-IX: step 1/1. Its function is as follows. Catalyzes the ferrous insertion into protoporphyrin IX. The sequence is that of Ferrochelatase from Francisella tularensis subsp. mediasiatica (strain FSC147).